The chain runs to 290 residues: 4-hydroxybenzoate octaprenyltransferase (290 aa).

The next 6 membrane-spanning stretches (helical) occupy residues 33-53, 99-119, 141-161, 213-233, 234-254, and 268-288; these read LWAL…AVFV, LFVI…VKTI, LPQV…FCAV, LIIG…GWLN, GLGA…IWQQ, and AFLN…LSYL.

Belongs to the UbiA prenyltransferase family. Requires Mg(2+) as cofactor.

Its subcellular location is the cell inner membrane. The enzyme catalyses all-trans-octaprenyl diphosphate + 4-hydroxybenzoate = 4-hydroxy-3-(all-trans-octaprenyl)benzoate + diphosphate. The protein operates within cofactor biosynthesis; ubiquinone biosynthesis. Catalyzes the prenylation of para-hydroxybenzoate (PHB) with an all-trans polyprenyl group. Mediates the second step in the final reaction sequence of ubiquinone-8 (UQ-8) biosynthesis, which is the condensation of the polyisoprenoid side chain with PHB, generating the first membrane-bound Q intermediate 3-octaprenyl-4-hydroxybenzoate. The protein is 4-hydroxybenzoate octaprenyltransferase of Cronobacter sakazakii (strain ATCC BAA-894) (Enterobacter sakazakii).